We begin with the raw amino-acid sequence, 304 residues long: Recombination-associated protein RdgC (304 aa).

It belongs to the RdgC family.

It localises to the cytoplasm. It is found in the nucleoid. May be involved in recombination. The chain is Recombination-associated protein RdgC from Paraburkholderia phymatum (strain DSM 17167 / CIP 108236 / LMG 21445 / STM815) (Burkholderia phymatum).